The following is a 397-amino-acid chain: Tryptophan synthase beta chain (397 aa).

At K86 the chain carries N6-(pyridoxal phosphate)lysine.

This sequence belongs to the TrpB family. In terms of assembly, tetramer of two alpha and two beta chains. Pyridoxal 5'-phosphate is required as a cofactor.

It catalyses the reaction (1S,2R)-1-C-(indol-3-yl)glycerol 3-phosphate + L-serine = D-glyceraldehyde 3-phosphate + L-tryptophan + H2O. It participates in amino-acid biosynthesis; L-tryptophan biosynthesis; L-tryptophan from chorismate: step 5/5. The beta subunit is responsible for the synthesis of L-tryptophan from indole and L-serine. This chain is Tryptophan synthase beta chain, found in Aeromonas salmonicida (strain A449).